A 233-amino-acid chain; its full sequence is Probable septum site-determining protein MinC (233 aa).

This sequence belongs to the MinC family. Interacts with MinD and FtsZ.

In terms of biological role, cell division inhibitor that blocks the formation of polar Z ring septums. Rapidly oscillates between the poles of the cell to destabilize FtsZ filaments that have formed before they mature into polar Z rings. Prevents FtsZ polymerization. The chain is Probable septum site-determining protein MinC from Proteus mirabilis (strain HI4320).